A 241-amino-acid polypeptide reads, in one-letter code: MADS-box transcription factor 57 (241 aa).

An MADS-box domain is found at 1-61 (MGRGKIVIRR…GRLYEFSSTN (61 aa)). A K-box domain is found at 85–178 (IKIWQREAAS…LNVMSQQKLE (94 aa)). The tract at residues 216–241 (LELSQSQQREGECSKTAAPELGLHLP) is disordered.

In terms of assembly, interacts with TB1. In terms of tissue distribution, expressed in seedling roots and shoots. Highly expressed in young leaves.

The protein localises to the nucleus. Functionally, transcriptional factor that targets the CArG motif 5'-C(A/T)TTAAAAAG-3' in the promoter of D14. Directly suppresses D14 expression to control the outgrowth of axillary buds. This Oryza sativa subsp. japonica (Rice) protein is MADS-box transcription factor 57.